Here is a 230-residue protein sequence, read N- to C-terminus: Membrane protein (230 aa).

The Virion surface portion of the chain corresponds to 1–24 (MSSPTTPVPVISWTADEAIKFLKE). A helical membrane pass occupies residues 25-45 (WNFSLGIIVLFITIILQFGYT). The Intravirion segment spans residues 46–55 (SRSMFVYVIK). Residues 56-76 (MVILWLMWPLTIILTIFNCVY) form a helical membrane-spanning segment. Topologically, residues 77–84 (ALNNVYLG) are virion surface. Residues 85–105 (FSIVFTIVAIIMWVVYFVNSI) traverse the membrane as a helical segment. Topologically, residues 106–228 (RLFIRTGSWW…SGMDTALLRN (123 aa)) are intravirion.

This sequence belongs to the betacoronaviruses M protein family. In terms of assembly, homomultimer. Interacts with envelope E protein in the budding compartment of the host cell, which is located between endoplasmic reticulum and the Golgi complex. Forms a complex with HE and S proteins. Interacts with nucleocapsid N protein. This interaction probably participates in RNA packaging into the virus.

The protein resides in the virion membrane. It is found in the host Golgi apparatus membrane. In terms of biological role, component of the viral envelope that plays a central role in virus morphogenesis and assembly via its interactions with other viral proteins. This Porcine hemagglutinating encephalomyelitis virus (strain 67N) (HEV-67N) protein is Membrane protein.